Here is a 350-residue protein sequence, read N- to C-terminus: Hydroxymethylglutaryl-CoA synthase (350 aa).

(3S)-3-hydroxy-3-methylglutaryl-CoA contacts are provided by D33 and V34. The active-site Proton donor/acceptor is the E85. (3S)-3-hydroxy-3-methylglutaryl-CoA contacts are provided by C117 and T158. Residue C117 is the Acyl-thioester intermediate of the active site. R204 contacts CoA. (3S)-3-hydroxy-3-methylglutaryl-CoA is bound by residues T206 and H239. The active-site Proton donor/acceptor is H239. Position 244 (K244) interacts with CoA. 3 residues coordinate (3S)-3-hydroxy-3-methylglutaryl-CoA: K248, N271, and S301.

Belongs to the thiolase-like superfamily. Archaeal HMG-CoA synthase family. As to quaternary structure, interacts with acetoacetyl-CoA thiolase that catalyzes the precedent step in the pathway and with a DUF35 protein. The acetoacetyl-CoA thiolase/HMG-CoA synthase complex channels the intermediate via a fused CoA-binding site, which allows for efficient coupling of the endergonic thiolase reaction with the exergonic HMGCS reaction.

The enzyme catalyses acetoacetyl-CoA + acetyl-CoA + H2O = (3S)-3-hydroxy-3-methylglutaryl-CoA + CoA + H(+). Its pathway is metabolic intermediate biosynthesis; (R)-mevalonate biosynthesis; (R)-mevalonate from acetyl-CoA: step 2/3. Its function is as follows. Catalyzes the condensation of acetyl-CoA with acetoacetyl-CoA to form 3-hydroxy-3-methylglutaryl-CoA (HMG-CoA). Functions in the mevalonate (MVA) pathway leading to isopentenyl diphosphate (IPP), a key precursor for the biosynthesis of isoprenoid compounds that are building blocks of archaeal membrane lipids. The chain is Hydroxymethylglutaryl-CoA synthase from Methanopyrus kandleri (strain AV19 / DSM 6324 / JCM 9639 / NBRC 100938).